A 316-amino-acid chain; its full sequence is Acetyl-coenzyme A carboxylase carboxyl transferase subunit alpha (316 aa).

Residues 39–293 (KLEEKNAQLT…KKHLQANLTN (255 aa)) form the CoA carboxyltransferase C-terminal domain.

This sequence belongs to the AccA family. In terms of assembly, acetyl-CoA carboxylase is a heterohexamer composed of biotin carboxyl carrier protein (AccB), biotin carboxylase (AccC) and two subunits each of ACCase subunit alpha (AccA) and ACCase subunit beta (AccD).

The protein localises to the cytoplasm. It catalyses the reaction N(6)-carboxybiotinyl-L-lysyl-[protein] + acetyl-CoA = N(6)-biotinyl-L-lysyl-[protein] + malonyl-CoA. Its pathway is lipid metabolism; malonyl-CoA biosynthesis; malonyl-CoA from acetyl-CoA: step 1/1. Component of the acetyl coenzyme A carboxylase (ACC) complex. First, biotin carboxylase catalyzes the carboxylation of biotin on its carrier protein (BCCP) and then the CO(2) group is transferred by the carboxyltransferase to acetyl-CoA to form malonyl-CoA. This is Acetyl-coenzyme A carboxylase carboxyl transferase subunit alpha from Coxiella burnetii (strain RSA 331 / Henzerling II).